Reading from the N-terminus, the 211-residue chain is Prolactin (211 aa).

The first 24 residues, 1–24 (MTHRRTKLFMMAAVVSYVMTSCGA), serve as a signal peptide directing secretion. 2 disulfide bridges follow: Cys70–Cys184 and Cys201–Cys211.

The protein belongs to the somatotropin/prolactin family.

The protein localises to the secreted. In Paralichthys olivaceus (Bastard halibut), this protein is Prolactin (prl).